The sequence spans 343 residues: MLVLGVESTAHTFSLGLVLDGKILGQLGKTYLPPSGEGIHPREAADHHSKVAPVIFRQLLNAHGITASDIDVIAYAAGPGLGPALRIGAVFARALAIKLGVPLVPVHHGIAHIEVARYTTASCDPLVLLISGGHTLIAGFSEGRYRIFGETLDVAIGNAIDMFAREVGLGFPGVPAVEKCAESADRLVPFPMTIIGQDLSYAGLTTYALKLWKSGTPLPVVCKSLVEAAYYMLAEVTERALAFTKKRELVVAGGVARSKRLRGILEHVGREYGVAVKIVPDEYAGDNGAMIALTGYYAYRRGIRTTPEESFVKQRWRLDSVDIPWFYDLCEEVVLNTSTKRRP.

Fe cation-binding residues include His108 and His112. Residues 129–133, Asp161, Glu178, and Ser258 contribute to the substrate site; that span reads LISGG. Residue Asp286 participates in Fe cation binding.

Belongs to the KAE1 / TsaD family. It depends on Fe(2+) as a cofactor.

It is found in the cytoplasm. It carries out the reaction L-threonylcarbamoyladenylate + adenosine(37) in tRNA = N(6)-L-threonylcarbamoyladenosine(37) in tRNA + AMP + H(+). Functionally, required for the formation of a threonylcarbamoyl group on adenosine at position 37 (t(6)A37) in tRNAs that read codons beginning with adenine. Is probably involved in the transfer of the threonylcarbamoyl moiety of threonylcarbamoyl-AMP (TC-AMP) to the N6 group of A37. The polypeptide is tRNA N6-adenosine threonylcarbamoyltransferase (Pyrobaculum aerophilum (strain ATCC 51768 / DSM 7523 / JCM 9630 / CIP 104966 / NBRC 100827 / IM2)).